Consider the following 138-residue polypeptide: Large ribosomal subunit protein eL14A (138 aa).

At serine 2 the chain carries N-acetylserine.

It belongs to the eukaryotic ribosomal protein eL14 family. As to quaternary structure, component of the large ribosomal subunit (LSU). Mature yeast ribosomes consist of a small (40S) and a large (60S) subunit. The 40S small subunit contains 1 molecule of ribosomal RNA (18S rRNA) and 33 different proteins (encoded by 57 genes). The large 60S subunit contains 3 rRNA molecules (25S, 5.8S and 5S rRNA) and 46 different proteins (encoded by 81 genes). N-terminally acetylated by acetyltransferase NatA.

It is found in the cytoplasm. Its function is as follows. Component of the ribosome, a large ribonucleoprotein complex responsible for the synthesis of proteins in the cell. The small ribosomal subunit (SSU) binds messenger RNAs (mRNAs) and translates the encoded message by selecting cognate aminoacyl-transfer RNA (tRNA) molecules. The large subunit (LSU) contains the ribosomal catalytic site termed the peptidyl transferase center (PTC), which catalyzes the formation of peptide bonds, thereby polymerizing the amino acids delivered by tRNAs into a polypeptide chain. The nascent polypeptides leave the ribosome through a tunnel in the LSU and interact with protein factors that function in enzymatic processing, targeting, and the membrane insertion of nascent chains at the exit of the ribosomal tunnel. The chain is Large ribosomal subunit protein eL14A from Saccharomyces cerevisiae (strain ATCC 204508 / S288c) (Baker's yeast).